The chain runs to 121 residues: Large ribosomal subunit protein bL12 (121 aa).

Belongs to the bacterial ribosomal protein bL12 family. In terms of assembly, homodimer. Part of the ribosomal stalk of the 50S ribosomal subunit. Forms a multimeric L10(L12)X complex, where L10 forms an elongated spine to which 2 to 4 L12 dimers bind in a sequential fashion. Binds GTP-bound translation factors.

In terms of biological role, forms part of the ribosomal stalk which helps the ribosome interact with GTP-bound translation factors. Is thus essential for accurate translation. The protein is Large ribosomal subunit protein bL12 of Pelagibacter ubique (strain HTCC1062).